Consider the following 177-residue polypeptide: Interleukin-25 (177 aa).

An N-terminal signal peptide occupies residues 1 to 32 (MRERPRLGEDSSLISLFLQVVAFLAMVMGTHT). Positions 58–81 (PVPPLEPARPNRHPESCRASEDGP) are disordered. Basic and acidic residues predominate over residues 69–78 (RHPESCRASE). 2 disulfide bridges follow: Cys-110–Cys-168 and Cys-115–Cys-170. Asn-136 carries N-linked (GlcNAc...) asparagine glycosylation.

The protein belongs to the IL-17 family. Expressed at low levels in several tissues, including brain, kidney, lung, prostate, testis, spinal cord, adrenal gland, and trachea.

The protein resides in the secreted. Functionally, cytokine produced by various cells such as eosinophils, T-helper type 2 (Th2) cells or epithelial cells that plays a role in internal safety of adaptive immune responses by regulating cytokine production. Promotes and augments T-helper type 2 responses locally or systemically. Exerts its activity via its receptor composed of IL17RA and IL17RB for signal transduction. In turn, stimulates the JAK2-STAT5A pathway and promotes the secretion of type-2 associated cytokines including IL4, IL9 and IL13. Also induces the release of IL8, and IL6 from eosinophils through the combined activation of MAPK and NF-kappa-B pathways. Inhibits the differentiation of T-helper (Th17) cells via the production of IL4, IL5 and IL13. The sequence is that of Interleukin-25 (IL25) from Homo sapiens (Human).